A 221-amino-acid polypeptide reads, in one-letter code: uncharacterized protein (221 aa).

This is an uncharacterized protein from Escherichia coli (strain K12).